Here is a 331-residue protein sequence, read N- to C-terminus: Probable staphylococcal-like nuclease CAN1 (331 aa).

Gly-2 carries N-myristoyl glycine lipidation. The S-palmitoyl cysteine moiety is linked to residue Cys-10. Residues 136–313 (HTLPVDAKAV…QSGRKGLWAA (178 aa)) form the TNase-like domain. Asp-149 is a Ca(2+) binding site. Arg-220 is a catalytic residue. Residue Asp-225 participates in Ca(2+) binding. Residues Glu-228 and Arg-262 contribute to the active site. Residues 306–331 (GRKGLWAASRPQKPWEWRRDKRNGTA) form a disordered region. The span at 318–331 (KPWEWRRDKRNGTA) shows a compositional bias: basic and acidic residues.

Belongs to the thermonuclease family. Ca(2+) serves as cofactor.

Its subcellular location is the cell membrane. Its function is as follows. Enzyme that catalyzes the hydrolysis of both DNA and RNA at the 5' position of the phosphodiester bond. The chain is Probable staphylococcal-like nuclease CAN1 from Oryza sativa subsp. japonica (Rice).